Consider the following 391-residue polypeptide: Processive diacylglycerol beta-glucosyltransferase (391 aa).

The protein belongs to the glycosyltransferase 28 family. UgtP subfamily.

The protein resides in the cell membrane. The catalysed reaction is a 1,2-diacyl-3-O-(beta-D-glucopyranosyl)-sn-glycerol + UDP-alpha-D-glucose = a 1,2-diacyl-3-O-(beta-D-Glc-(1-&gt;6)-beta-D-Glc)-sn-glycerol + UDP + H(+). It catalyses the reaction a 1,2-diacyl-sn-glycerol + UDP-alpha-D-glucose = a 1,2-diacyl-3-O-(beta-D-glucopyranosyl)-sn-glycerol + UDP + H(+). It participates in glycolipid metabolism; diglucosyl-diacylglycerol biosynthesis. Functionally, processive glucosyltransferase involved in the biosynthesis of both the bilayer- and non-bilayer-forming membrane glucolipids. Is able to successively transfer two glucosyl residues to diacylglycerol (DAG), thereby catalyzing the formation of beta-monoglucosyl-DAG (3-O-(beta-D-glucopyranosyl)-1,2-diacyl-sn-glycerol) and beta-diglucosyl-DAG (3-O-(beta-D-glucopyranosyl-beta-(1-&gt;6)-D-glucopyranosyl)-1,2-diacyl-sn-glycerol). Beta-diglucosyl-DAG is the predominant glycolipid found in Bacillales and is also used as a membrane anchor for lipoteichoic acid (LTA). The protein is Processive diacylglycerol beta-glucosyltransferase of Staphylococcus epidermidis (strain ATCC 12228 / FDA PCI 1200).